We begin with the raw amino-acid sequence, 130 residues long: Small ribosomal subunit protein uS9 (130 aa).

The interval 108–130 is disordered; it reads SREKERKKYGQRGARARFQYSKR.

It belongs to the universal ribosomal protein uS9 family.

The chain is Small ribosomal subunit protein uS9 from Solidesulfovibrio magneticus (strain ATCC 700980 / DSM 13731 / RS-1) (Desulfovibrio magneticus).